The following is a 401-amino-acid chain: Imidazolonepropionase (401 aa).

Positions 70 and 72 each coordinate Fe(3+). Zn(2+) is bound by residues histidine 70 and histidine 72. Arginine 79, tyrosine 142, and histidine 175 together coordinate 4-imidazolone-5-propanoate. Tyrosine 142 is a binding site for N-formimidoyl-L-glutamate. Histidine 238 serves as a coordination point for Fe(3+). Histidine 238 provides a ligand contact to Zn(2+). Glutamine 241 provides a ligand contact to 4-imidazolone-5-propanoate. Residue aspartate 313 participates in Fe(3+) binding. Residue aspartate 313 participates in Zn(2+) binding. Residues asparagine 315 and glycine 317 each coordinate N-formimidoyl-L-glutamate. Threonine 318 lines the 4-imidazolone-5-propanoate pocket.

Belongs to the metallo-dependent hydrolases superfamily. HutI family. Zn(2+) is required as a cofactor. Requires Fe(3+) as cofactor.

The protein resides in the cytoplasm. It carries out the reaction 4-imidazolone-5-propanoate + H2O = N-formimidoyl-L-glutamate. The protein operates within amino-acid degradation; L-histidine degradation into L-glutamate; N-formimidoyl-L-glutamate from L-histidine: step 3/3. In terms of biological role, catalyzes the hydrolytic cleavage of the carbon-nitrogen bond in imidazolone-5-propanoate to yield N-formimidoyl-L-glutamate. It is the third step in the universal histidine degradation pathway. The sequence is that of Imidazolonepropionase from Xanthomonas campestris pv. campestris (strain 8004).